Reading from the N-terminus, the 153-residue chain is Prostaglandin E synthase (153 aa).

At 1–13 (MPPSGLELMNGQV) the chain is on the lumenal side. Residues 14-42 (LPAFLLCSALLVIKMYVVAVITGQVRLRK) traverse the membrane as a helical segment. Position 39 (arginine 39) interacts with glutathione. Over 43–61 (KAFANPEDAQRHGGLQYCR) the chain is Cytoplasmic. A helical membrane pass occupies residues 62-91 (NDPDVERCLRAHRNDMETIYPFLFLGFVYS). 74-78 (RNDME) is a glutathione binding site. The Lumenal portion of the chain corresponds to 92–96 (FLGPN). The helical transmembrane segment at 97-120 (PFVARMHFLVFFLGRMVHTVAYLG) threads the bilayer. Glutathione is bound by residues histidine 114 and tyrosine 118. At 121 to 124 (KLRA) the chain is on the cytoplasmic side. A helical transmembrane segment spans residues 125-153 (PTRSLAYTLAQLPCASMALQIVWEAARHL). Residue 127–131 (RSLAY) participates in glutathione binding.

It belongs to the MAPEG family. Homotrimer. Glutathione serves as cofactor.

It localises to the membrane. Its subcellular location is the cytoplasm. The protein localises to the perinuclear region. The catalysed reaction is prostaglandin H2 = prostaglandin E2. It catalyses the reaction 2-glyceryl-prostaglandin H2 = 2-glyceryl-prostaglandin E2. It carries out the reaction prostaglandin G2 = (15S)-15-hydroperoxy-prostaglandin E2. The enzyme catalyses 1-chloro-2,4-dinitrobenzene + glutathione = 2,4-dinitrophenyl-S-glutathione + chloride + H(+). The catalysed reaction is (5S)-hydroperoxy-(6E,8Z,11Z,14Z)-eicosatetraenoate + 2 glutathione = (5S)-hydroxy-(6E,8Z,11Z,14Z)-eicosatetraenoate + glutathione disulfide + H2O. It participates in lipid metabolism; prostaglandin biosynthesis. Functionally, terminal enzyme of the cyclooxygenase (COX)-2-mediated prostaglandin E2 (PGE2) biosynthetic pathway. Catalyzes the glutathione-dependent oxidoreduction of prostaglandin endoperoxide H2 (PGH2) to prostaglandin E2 (PGE2) in response to inflammatory stimuli. Plays a key role in inflammation response, fever and pain. Also catalyzes the oxidoreduction of endocannabinoids into prostaglandin glycerol esters and PGG2 into 15-hydroperoxy-PGE2. In addition, displays low glutathione transferase and glutathione-dependent peroxidase activities, toward 1-chloro-2,4-dinitrobenzene and 5-hydroperoxyicosatetraenoic acid (5-HPETE), respectively. This chain is Prostaglandin E synthase (PTGES), found in Bos taurus (Bovine).